An 83-amino-acid chain; its full sequence is Small ribosomal subunit protein uS17 (83 aa).

The protein belongs to the universal ribosomal protein uS17 family. In terms of assembly, part of the 30S ribosomal subunit.

One of the primary rRNA binding proteins, it binds specifically to the 5'-end of 16S ribosomal RNA. The sequence is that of Small ribosomal subunit protein uS17 from Buchnera aphidicola subsp. Acyrthosiphon pisum (strain 5A).